Reading from the N-terminus, the 154-residue chain is Ribosomal RNA large subunit methyltransferase H (154 aa).

Positions 70 and 102 each coordinate S-adenosyl-L-methionine.

This sequence belongs to the RNA methyltransferase RlmH family. Homodimer.

Its subcellular location is the cytoplasm. It catalyses the reaction pseudouridine(1915) in 23S rRNA + S-adenosyl-L-methionine = N(3)-methylpseudouridine(1915) in 23S rRNA + S-adenosyl-L-homocysteine + H(+). In terms of biological role, specifically methylates the pseudouridine at position 1915 (m3Psi1915) in 23S rRNA. This chain is Ribosomal RNA large subunit methyltransferase H, found in Hyphomonas neptunium (strain ATCC 15444).